A 30-amino-acid chain; its full sequence is Cyclotide mela-5 (30 aa).

The segment at residues 1 to 30 (GSAIACGESCFKFKCYTPGCSCSYPICKKD) is a cross-link (cyclopeptide (Gly-Asp)). 3 cysteine pairs are disulfide-bonded: Cys6–Cys20, Cys10–Cys22, and Cys15–Cys27.

This is a cyclic peptide. Post-translationally, contains 3 disulfide bonds.

Functionally, probably participates in a plant defense mechanism (Potential). Binds to and induces leakage in phospholipd membranes, particularly ones containing 1-palmitoyl-2-oleophosphatidylethanolamine (POPE). This is Cyclotide mela-5 from Melicytus latifolius (Norfolk Island mahoe).